We begin with the raw amino-acid sequence, 358 residues long: Replication-associated protein (358 aa).

Residues Arg-7–Phe-115 enclose the CRESS-DNA virus Rep endonuclease domain. The short motif at Phe-14–Tyr-17 is the RCR-1 element. A divalent metal cation contacts are provided by Glu-48, His-56, and His-58. The short motif at His-56–His-58 is the RCR-2 element. The active-site For DNA cleavage activity is Tyr-102. An RCR-3 motif is present at residues Tyr-102–Lys-105. An a divalent metal cation-binding site is contributed by Asp-106. The tract at residues Lys-142–Leu-152 is binding to RBR1. The segment at Lys-155–Pro-175 is oligomerization. Gly-220–Thr-227 serves as a coordination point for ATP.

Belongs to the geminiviridae Rep protein family. As to quaternary structure, homooligomer. Interacts with the replication enhancer protein (REn). Interacts with host retinoblastoma-related protein 1 (RBR1), and may thereby induce the transcription of host replicative enzymes even if the cell is not dividing anymore. Interacts with host PCNA. Interacts with host SCE1 protein. Mg(2+) serves as cofactor. The cofactor is Mn(2+).

Its subcellular location is the host nucleus. Its function is as follows. Essential for the replication of viral ssDNA. The closed circular ssDNA genome is first converted to a superhelical dsDNA. Rep binds a specific region at the genome origin of replication. It introduces an endonucleolytic nick within the conserved sequence 5'-TAATATTAC-3' in the intergenic region of the genome present in all geminiviruses, thereby initiating the rolling circle replication (RCR). Following cleavage, binds covalently to the 5'-phosphate of DNA as a tyrosyl ester. The cleavage gives rise to a free 3'-OH that serves as a primer for the cellular DNA polymerase. The polymerase synthesizes the (+) strand DNA by rolling circle mechanism. After one round of replication, a Rep-catalyzed nucleotidyl transfer reaction releases a circular single-stranded virus genome, thereby terminating the replication. Displays origin-specific DNA cleavage, nucleotidyl transferase, ATPase and helicase activities. The chain is Replication-associated protein from Hewittia sublobata (Coralbush).